Here is a 314-residue protein sequence, read N- to C-terminus: Acetyl-coenzyme A carboxylase carboxyl transferase subunit beta (314 aa).

A CoA carboxyltransferase N-terminal domain is found at 37–307 (LWQKCPACDA…MSLPALEPTY (271 aa)). Zn(2+) contacts are provided by Cys-41, Cys-44, Cys-60, and Cys-63. A C4-type zinc finger spans residues 41–63 (CPACDALTYTKDLQQNWQVCPSC).

This sequence belongs to the AccD/PCCB family. In terms of assembly, acetyl-CoA carboxylase is a heterohexamer composed of biotin carboxyl carrier protein (AccB), biotin carboxylase (AccC) and two subunits each of ACCase subunit alpha (AccA) and ACCase subunit beta (AccD). Zn(2+) serves as cofactor.

The protein resides in the cytoplasm. It catalyses the reaction N(6)-carboxybiotinyl-L-lysyl-[protein] + acetyl-CoA = N(6)-biotinyl-L-lysyl-[protein] + malonyl-CoA. The protein operates within lipid metabolism; malonyl-CoA biosynthesis; malonyl-CoA from acetyl-CoA: step 1/1. Component of the acetyl coenzyme A carboxylase (ACC) complex. Biotin carboxylase (BC) catalyzes the carboxylation of biotin on its carrier protein (BCCP) and then the CO(2) group is transferred by the transcarboxylase to acetyl-CoA to form malonyl-CoA. The chain is Acetyl-coenzyme A carboxylase carboxyl transferase subunit beta from Synechococcus sp. (strain JA-3-3Ab) (Cyanobacteria bacterium Yellowstone A-Prime).